Here is a 386-residue protein sequence, read N- to C-terminus: uncharacterized protein (386 aa).

A run of 12 helical transmembrane segments spans residues 8–28 (VFVI…IAPI), 43–63 (IGLI…PVGV), 79–99 (FFYG…GFLI), 102–122 (IFTG…IAAI), 134–154 (IFNS…GILA), 156–176 (MYGI…AAII), 216–236 (FIIN…LALY), 241–261 (NITI…MALL), 272–292 (LGNI…YLLS), 297–317 (FLTI…SSTA), 342–362 (INIG…ILGI), and 365–385 (MYKF…LRIE).

It belongs to the major facilitator superfamily.

It is found in the cell membrane. This is an uncharacterized protein from Methanocaldococcus jannaschii (strain ATCC 43067 / DSM 2661 / JAL-1 / JCM 10045 / NBRC 100440) (Methanococcus jannaschii).